Reading from the N-terminus, the 642-residue chain is 1-deoxy-D-xylulose-5-phosphate synthase (642 aa).

Residues His-79 and 120-122 contribute to the thiamine diphosphate site; that span reads AHS. Asp-155 is a Mg(2+) binding site. Thiamine diphosphate contacts are provided by residues 156-157, Asn-184, Tyr-293, and Glu-375; that span reads GS. Asn-184 provides a ligand contact to Mg(2+).

This sequence belongs to the transketolase family. DXPS subfamily. Homodimer. Mg(2+) serves as cofactor. Requires thiamine diphosphate as cofactor.

The enzyme catalyses D-glyceraldehyde 3-phosphate + pyruvate + H(+) = 1-deoxy-D-xylulose 5-phosphate + CO2. The protein operates within metabolic intermediate biosynthesis; 1-deoxy-D-xylulose 5-phosphate biosynthesis; 1-deoxy-D-xylulose 5-phosphate from D-glyceraldehyde 3-phosphate and pyruvate: step 1/1. Functionally, catalyzes the acyloin condensation reaction between C atoms 2 and 3 of pyruvate and glyceraldehyde 3-phosphate to yield 1-deoxy-D-xylulose-5-phosphate (DXP). The sequence is that of 1-deoxy-D-xylulose-5-phosphate synthase from Ruegeria pomeroyi (strain ATCC 700808 / DSM 15171 / DSS-3) (Silicibacter pomeroyi).